We begin with the raw amino-acid sequence, 266 residues long: Small ribosomal subunit protein uS2 (266 aa).

The segment at 227–266 (GVSFTEETPSEPIQSDSSEEEEGSLDISDLFEDTDLKEEE) is disordered. Residues 231-240 (TEETPSEPIQ) are compositionally biased toward polar residues. Positions 243–266 (SSEEEEGSLDISDLFEDTDLKEEE) are enriched in acidic residues.

It belongs to the universal ribosomal protein uS2 family.

This Pseudothermotoga lettingae (strain ATCC BAA-301 / DSM 14385 / NBRC 107922 / TMO) (Thermotoga lettingae) protein is Small ribosomal subunit protein uS2.